A 311-amino-acid chain; its full sequence is Malate dehydrogenase (311 aa).

NAD(+)-binding positions include 7 to 13 and Asp34; that span reads GAAGGIG. The substrate site is built by Arg81 and Arg87. NAD(+) is bound by residues Asn94 and 117-119; that span reads ITN. Asn119 and Arg153 together coordinate substrate. Residue His177 is the Proton acceptor of the active site. Residue Met227 participates in NAD(+) binding.

The protein belongs to the LDH/MDH superfamily. MDH type 1 family. As to quaternary structure, homodimer.

It carries out the reaction (S)-malate + NAD(+) = oxaloacetate + NADH + H(+). Catalyzes the reversible oxidation of malate to oxaloacetate. The sequence is that of Malate dehydrogenase from Vibrio campbellii (strain ATCC BAA-1116).